The chain runs to 118 residues: Large ribosomal subunit protein bL20 (118 aa).

Belongs to the bacterial ribosomal protein bL20 family.

Its function is as follows. Binds directly to 23S ribosomal RNA and is necessary for the in vitro assembly process of the 50S ribosomal subunit. It is not involved in the protein synthesizing functions of that subunit. The protein is Large ribosomal subunit protein bL20 of Francisella tularensis subsp. novicida (strain U112).